Here is a 525-residue protein sequence, read N- to C-terminus: Cytochrome P450 714A2 (525 aa).

The Lumenal segment spans residues 1–3 (MES). Residues 4–24 (LVVHTVNAIWCIVIVGIFSVG) traverse the membrane as a helical; Signal-anchor for type III membrane protein segment. Topologically, residues 25 to 525 (YHVYGRAVVE…PQHGVVIRVV (501 aa)) are cytoplasmic. Cys-475 is a heme binding site.

This sequence belongs to the cytochrome P450 family. Heme is required as a cofactor. As to expression, expressed in the shoot apical meristem (SAM) and petioles of young leaves, in the leaf margin and petiole vein of cotyledons, and at low levels in the filaments of developing flowers. Not detected in siliques.

It is found in the endoplasmic reticulum membrane. Its function is as follows. Involved in the inactivation of early gibberellin (GA) intermediates. The chain is Cytochrome P450 714A2 (CYP714A2) from Arabidopsis thaliana (Mouse-ear cress).